The following is a 381-amino-acid chain: E3 ubiquitin-protein ligase RNF133 (381 aa).

The PA domain maps to 65–167 (SSILKRVAGV…VKGMEILHLI (103 aa)). A helical transmembrane segment spans residues 186-208 (WLNHYFVSFMIVTTATLAYFTFY). Residues 256-297 (CVICFEAYKPNEIVRILTCKHFFHKNCIDPWILAHGTCPMCK) form an RING-type; atypical zinc finger. The disordered stretch occupies residues 340–381 (LPPARTSSKVTHVQEHPTSVNVGSQPPEAEETGHPSFGQHDL). Polar residues predominate over residues 344–363 (RTSSKVTHVQEHPTSVNVGS).

As to quaternary structure, interacts with E3 ligase UBE2J1. In terms of processing, auto-ubiquitinated.

The protein resides in the endoplasmic reticulum membrane. It carries out the reaction S-ubiquitinyl-[E2 ubiquitin-conjugating enzyme]-L-cysteine + [acceptor protein]-L-lysine = [E2 ubiquitin-conjugating enzyme]-L-cysteine + N(6)-ubiquitinyl-[acceptor protein]-L-lysine.. It participates in protein modification; protein ubiquitination. Its function is as follows. Has E3 ubiquitin-protein ligase activity. Plays a role in male fecundity through the interaction with the E2 ubituitin-protein ligase UBE2J1. In Rattus norvegicus (Rat), this protein is E3 ubiquitin-protein ligase RNF133 (Rnf133).